Consider the following 906-residue polypeptide: Ribonucleoside-diphosphate reductase large subunit-like protein (906 aa).

Disordered regions lie at residues 1-70 (MNPA…AGNT) and 89-129 (VSWR…LSTF). Residues 98 to 109 (PDGTPSVLSLTR) show a composition bias toward polar residues.

It belongs to the ribonucleoside diphosphate reductase large chain family.

Its subcellular location is the virion. The protein localises to the host cytoplasm. Its function is as follows. Does not possess a ribonucleotide reductase activity. Betaherpesviruses probably use another strategy to expand the dNTP pool in a quiescent host cell. This chain is Ribonucleoside-diphosphate reductase large subunit-like protein, found in Human cytomegalovirus (strain AD169) (HHV-5).